The following is an 836-amino-acid chain: MMLDLGPFSDEKFDAKRWVNSSCQARHPQDSLEKHLVDLEMKLQIASEEIGASLEEQSGGALLRVPRATRDVLRLRDDAVSLRGSVAGILQKLKKAEGSSADCIAALARVDNVKQRMEAAYKTLQDAAGLTQLSSTVEDVFASGDLPRAAETLASMRNCLSAVGEVAEFANVRKQLEVLEDRLEAMVQPRLTDALTYHKVDVAQDLRVILIRIGRFKSLELQYSKVRLKPIKQLWEDFDTKQRANKLANERSESQRLSSGDEFQSTSSQTSFASWLTSFYDELLLYLEQEWKWCMVAFPDDYMTLVPKLLVETMGVLGASFVSRLNLATGDAVPETKALAKGVMDLLSGDLPKGINIQTKHLEALIELHNVTGSFARNIQHLFAESELRILIDTLKAVYSPFESFKQKYGKMERAILSSEIAVVDLRGAVTRGVGAQGIELSETVRRMEESIPQVVVLLEAAVERCIGFTGGSEADELILALDDIMLQYISMLQETLKSLRVVCGVDGTGDGVGSKKDASAEKRESSRKMDLTSNEEWSIVQGALQILTVADCLTSRSSVFEASLRATLARLNSSLSISLFGTNLDHNLSHLKSEQTAGDLSMAGRASMDVAAIRLVDVPEKAHKLLNLLEQSKDPRFHALPLASQRVAAFADTVNELVYDVLISKVRQRLGEVSRLPIWSSVEEQTAFPLPNFSSYPQSYVTSVGEYLLTLPQQLEPLAEGISTNGDSNNEDAQFFATEWMFKVAEGATALYMDQLRGIQYISDRGAQQLSVDIEYLSNVLSALSMPIPPVLATFQTCLATPRGELKDVMKSEAGNELDCPTANLVCKMRRISFD.

Coiled-coil stretches lie at residues 29-49 (QDSLEKHLVDLEMKLQIASEE) and 107-127 (LARVDNVKQRMEAAYKTLQDA). The disordered stretch occupies residues 246–265 (KLANERSESQRLSSGDEFQS).

Belongs to the COG7 family. In terms of assembly, component of the conserved oligomeric Golgi complex which is composed of eight different subunits and is required for normal Golgi morphology and localization. Interacts with COG5 and COG6.

The protein localises to the golgi apparatus membrane. Required for normal Golgi function. Necessary for embryo development and pigmentation, especially for the expansion of cells and organs, and for the formation of the organized shoot apical meristem (SAM). Probably involved in the generation of the extra-cellular matrix. The polypeptide is Conserved oligomeric Golgi complex subunit 7 (Arabidopsis thaliana (Mouse-ear cress)).